Here is an 88-residue protein sequence, read N- to C-terminus: Cell division topological specificity factor (88 aa).

The protein belongs to the MinE family.

Prevents the cell division inhibition by proteins MinC and MinD at internal division sites while permitting inhibition at polar sites. This ensures cell division at the proper site by restricting the formation of a division septum at the midpoint of the long axis of the cell. The chain is Cell division topological specificity factor from Salmonella agona (strain SL483).